A 230-amino-acid chain; its full sequence is 7-cyano-7-deazaguanine synthase (230 aa).

Position 16 to 26 (16 to 26) interacts with ATP; it reads LSGGLDSMVSG. Residues Cys195, Cys205, Cys208, and Cys211 each coordinate Zn(2+).

It belongs to the QueC family. The cofactor is Zn(2+).

It carries out the reaction 7-carboxy-7-deazaguanine + NH4(+) + ATP = 7-cyano-7-deazaguanine + ADP + phosphate + H2O + H(+). It participates in purine metabolism; 7-cyano-7-deazaguanine biosynthesis. In terms of biological role, catalyzes the ATP-dependent conversion of 7-carboxy-7-deazaguanine (CDG) to 7-cyano-7-deazaguanine (preQ(0)). This is 7-cyano-7-deazaguanine synthase from Rhizorhabdus wittichii (strain DSM 6014 / CCUG 31198 / JCM 15750 / NBRC 105917 / EY 4224 / RW1) (Sphingomonas wittichii).